We begin with the raw amino-acid sequence, 221 residues long: Vesicle-associated membrane protein 722 (221 aa).

Residues 1–196 (MAQQSLIYSF…MWFQNMKIKL (196 aa)) lie on the Cytoplasmic side of the membrane. The 105-residue stretch at 10–114 (FVARGTVILV…SLNKEFGSKL (105 aa)) folds into the Longin domain. The v-SNARE coiled-coil homology domain maps to 130–190 (KLAKVKAQVS…TQMRRKMWFQ (61 aa)). The chain crosses the membrane as a helical; Anchor for type IV membrane protein span at residues 197-217 (IVLAIIIALILIIILSICGGF). Residues 218 to 221 (NCGK) lie on the Vesicular side of the membrane.

Belongs to the synaptobrevin family. Highly expressed in stems and roots. Detected in flowers and leaves.

Its subcellular location is the cell membrane. It is found in the early endosome membrane. Functionally, involved in the targeting and/or fusion of transport vesicles to their target membrane. In Arabidopsis thaliana (Mouse-ear cress), this protein is Vesicle-associated membrane protein 722.